Here is a 156-residue protein sequence, read N- to C-terminus: Small ribosomal subunit protein uS7 (156 aa).

The protein belongs to the universal ribosomal protein uS7 family. As to quaternary structure, part of the 30S ribosomal subunit. Contacts proteins S9 and S11.

One of the primary rRNA binding proteins, it binds directly to 16S rRNA where it nucleates assembly of the head domain of the 30S subunit. Is located at the subunit interface close to the decoding center, probably blocks exit of the E-site tRNA. This chain is Small ribosomal subunit protein uS7, found in Pseudomonas syringae pv. tomato (strain ATCC BAA-871 / DC3000).